Consider the following 141-residue polypeptide: Flagellar assembly factor FliW (141 aa).

This sequence belongs to the FliW family. As to quaternary structure, interacts with translational regulator CsrA and flagellin(s).

It is found in the cytoplasm. Its function is as follows. Acts as an anti-CsrA protein, binds CsrA and prevents it from repressing translation of its target genes, one of which is flagellin. Binds to flagellin and participates in the assembly of the flagellum. This is Flagellar assembly factor FliW from Clostridium beijerinckii (strain ATCC 51743 / NCIMB 8052) (Clostridium acetobutylicum).